The primary structure comprises 270 residues: tRNA pseudouridine synthase A (270 aa).

The active-site Nucleophile is the Asp-60. Positions 107-111 are RNA binding; it reads FHARF. Tyr-118 is a binding site for substrate. The segment at 168–172 is interaction with tRNA; sequence QCQSR.

The protein belongs to the tRNA pseudouridine synthase TruA family. Homodimer.

It carries out the reaction uridine(38/39/40) in tRNA = pseudouridine(38/39/40) in tRNA. Functionally, formation of pseudouridine at positions 38, 39 and 40 in the anticodon stem and loop of transfer RNAs. The protein is tRNA pseudouridine synthase A of Enterobacter sp. (strain 638).